We begin with the raw amino-acid sequence, 407 residues long: Succinyl-diaminopimelate desuccinylase (407 aa).

The span at 1–10 (MSDIDNNLTS) shows a compositional bias: polar residues. The interval 1–20 (MSDIDNNLTSQTHQQATHQQ) is disordered. The segment covering 11–20 (QTHQQATHQQ) has biased composition (low complexity). His-93 lines the Zn(2+) pocket. Asp-95 is a catalytic residue. Position 126 (Asp-126) interacts with Zn(2+). Glu-160 (proton acceptor) is an active-site residue. Residues Glu-161, Glu-189, and His-379 each coordinate Zn(2+).

Belongs to the peptidase M20A family. DapE subfamily. Homodimer. It depends on Zn(2+) as a cofactor. Requires Co(2+) as cofactor.

The catalysed reaction is N-succinyl-(2S,6S)-2,6-diaminopimelate + H2O = (2S,6S)-2,6-diaminopimelate + succinate. It functions in the pathway amino-acid biosynthesis; L-lysine biosynthesis via DAP pathway; LL-2,6-diaminopimelate from (S)-tetrahydrodipicolinate (succinylase route): step 3/3. Catalyzes the hydrolysis of N-succinyl-L,L-diaminopimelic acid (SDAP), forming succinate and LL-2,6-diaminopimelate (DAP), an intermediate involved in the bacterial biosynthesis of lysine and meso-diaminopimelic acid, an essential component of bacterial cell walls. This Psychrobacter arcticus (strain DSM 17307 / VKM B-2377 / 273-4) protein is Succinyl-diaminopimelate desuccinylase.